Consider the following 156-residue polypeptide: Small ribosomal subunit protein uS7 (156 aa).

The protein belongs to the universal ribosomal protein uS7 family. Part of the 30S ribosomal subunit. Contacts proteins S9 and S11.

Functionally, one of the primary rRNA binding proteins, it binds directly to 16S rRNA where it nucleates assembly of the head domain of the 30S subunit. Is located at the subunit interface close to the decoding center, probably blocks exit of the E-site tRNA. This chain is Small ribosomal subunit protein uS7, found in Sinorhizobium medicae (strain WSM419) (Ensifer medicae).